Consider the following 368-residue polypeptide: Deoxyhypusine synthase (368 aa).

Residues 104 to 108, 130 to 132, Glu-136, and Asp-237 each bind NAD(+); these read SNLVS and TTG. A spermidine-binding site is contributed by 135–136; the sequence is EE. Asp-242 provides a ligand contact to spermidine. Gly-284 provides a ligand contact to NAD(+). Residue His-289 participates in spermidine binding. Residue 309 to 310 participates in NAD(+) binding; the sequence is TG. Residues 315-317 and 324-330 contribute to the spermidine site; these read GSD and EAVSWGK. The active-site Nucleophile is the Lys-330. An NAD(+)-binding site is contributed by 343–344; sequence DA.

Belongs to the deoxyhypusine synthase family. NAD(+) serves as cofactor.

It catalyses the reaction [eIF5A protein]-L-lysine + spermidine = [eIF5A protein]-deoxyhypusine + propane-1,3-diamine. Its pathway is protein modification; eIF5A hypusination. In terms of biological role, catalyzes the NAD-dependent oxidative cleavage of spermidine and the subsequent transfer of the butylamine moiety of spermidine to the epsilon-amino group of a specific lysine residue of the eIF-5A precursor protein to form the intermediate deoxyhypusine residue. Also able to produce homospermidine from putrescine. This chain is Deoxyhypusine synthase (DHS), found in Arabidopsis thaliana (Mouse-ear cress).